Reading from the N-terminus, the 430-residue chain is Enolase (430 aa).

Residue Gln-163 participates in (2R)-2-phosphoglycerate binding. Catalysis depends on Glu-205, which acts as the Proton donor. Residues Asp-242, Glu-287, and Asp-314 each coordinate Mg(2+). The (2R)-2-phosphoglycerate site is built by Lys-339, Arg-368, Ser-369, and Lys-390. Lys-339 functions as the Proton acceptor in the catalytic mechanism.

Belongs to the enolase family. Mg(2+) is required as a cofactor.

The protein localises to the cytoplasm. Its subcellular location is the secreted. It localises to the cell surface. The enzyme catalyses (2R)-2-phosphoglycerate = phosphoenolpyruvate + H2O. Its pathway is carbohydrate degradation; glycolysis; pyruvate from D-glyceraldehyde 3-phosphate: step 4/5. Functionally, catalyzes the reversible conversion of 2-phosphoglycerate (2-PG) into phosphoenolpyruvate (PEP). It is essential for the degradation of carbohydrates via glycolysis. This Bacillus cytotoxicus (strain DSM 22905 / CIP 110041 / 391-98 / NVH 391-98) protein is Enolase.